Reading from the N-terminus, the 337-residue chain is Beta-hexosaminidase (337 aa).

Residues Asp-62, Arg-70, Arg-133, and 163–164 contribute to the substrate site; that span reads KH. His-176 serves as the catalytic Proton donor/acceptor. The active-site Nucleophile is Asp-248.

It belongs to the glycosyl hydrolase 3 family. NagZ subfamily.

The protein localises to the cytoplasm. The catalysed reaction is Hydrolysis of terminal non-reducing N-acetyl-D-hexosamine residues in N-acetyl-beta-D-hexosaminides.. It functions in the pathway cell wall biogenesis; peptidoglycan recycling. In terms of biological role, plays a role in peptidoglycan recycling by cleaving the terminal beta-1,4-linked N-acetylglucosamine (GlcNAc) from peptide-linked peptidoglycan fragments, giving rise to free GlcNAc, anhydro-N-acetylmuramic acid and anhydro-N-acetylmuramic acid-linked peptides. This Psychromonas ingrahamii (strain DSM 17664 / CCUG 51855 / 37) protein is Beta-hexosaminidase.